The sequence spans 161 residues: Allophycocyanin beta chain (161 aa).

The residue at position 71 (Asn71) is an N4-methylasparagine. Cys81 serves as a coordination point for (2R,3E)-phycocyanobilin.

This sequence belongs to the phycobiliprotein family. Heterodimer of an alpha and a beta chain. Post-translationally, contains one covalently linked phycocyanobilin chromophore.

Its subcellular location is the cellular thylakoid membrane. Light-harvesting photosynthetic bile pigment-protein from the phycobiliprotein complex. Allophycocyanin has a maximum absorption at approximately 650 nanometers. This chain is Allophycocyanin beta chain (apcB), found in Synechococcus sp. (strain ATCC 27144 / PCC 6301 / SAUG 1402/1) (Anacystis nidulans).